We begin with the raw amino-acid sequence, 231 residues long: Cysteine-rich venom protein VAR10 (231 aa).

The first 19 residues, 1–19 (MILLKLYLTLAAILCQSRG), serve as a signal peptide directing secretion. An SCP domain is found at 41-169 (NKHNDLRRTV…SLKYFQVCQY (129 aa)). Intrachain disulfides connect C77–C156, C95–C170, C151–C167, C189–C196, and C214–C231. Positions 205 to 231 (CAYNDDYTSCPDLTKQVGCHHPVTANC) constitute a ShKT domain.

Belongs to the CRISP family. Post-translationally, contains 8 disulfide bonds. In terms of tissue distribution, expressed by the venom gland.

Its subcellular location is the secreted. Its function is as follows. Blocks ryanodine receptors, and potassium channels. The chain is Cysteine-rich venom protein VAR10 from Varanus varius (Lace monitor lizard).